Here is a 507-residue protein sequence, read N- to C-terminus: ATP synthase subunit alpha, chloroplastic (507 aa).

Gly170–Thr177 serves as a coordination point for ATP.

Belongs to the ATPase alpha/beta chains family. In terms of assembly, F-type ATPases have 2 components, CF(1) - the catalytic core - and CF(0) - the membrane proton channel. CF(1) has five subunits: alpha(3), beta(3), gamma(1), delta(1), epsilon(1). CF(0) has four main subunits: a, b, b' and c.

Its subcellular location is the plastid. It localises to the chloroplast thylakoid membrane. It catalyses the reaction ATP + H2O + 4 H(+)(in) = ADP + phosphate + 5 H(+)(out). Its function is as follows. Produces ATP from ADP in the presence of a proton gradient across the membrane. The alpha chain is a regulatory subunit. The chain is ATP synthase subunit alpha, chloroplastic from Sorghum bicolor (Sorghum).